A 210-amino-acid polypeptide reads, in one-letter code: 2-hydroxy-3-keto-5-methylthiopentenyl-1-phosphate phosphatase (210 aa).

The protein belongs to the HAD-like hydrolase superfamily. MtnX family.

The enzyme catalyses 2-hydroxy-5-methylsulfanyl-3-oxopent-1-enyl phosphate + H2O = 1,2-dihydroxy-5-(methylsulfanyl)pent-1-en-3-one + phosphate. It functions in the pathway amino-acid biosynthesis; L-methionine biosynthesis via salvage pathway; L-methionine from S-methyl-5-thio-alpha-D-ribose 1-phosphate: step 4/6. In terms of biological role, dephosphorylates 2-hydroxy-3-keto-5-methylthiopentenyl-1-phosphate (HK-MTPenyl-1-P) yielding 1,2-dihydroxy-3-keto-5-methylthiopentene (DHK-MTPene). This Microcystis aeruginosa (strain NIES-843 / IAM M-2473) protein is 2-hydroxy-3-keto-5-methylthiopentenyl-1-phosphate phosphatase.